Consider the following 84-residue polypeptide: uncharacterized protein (84 aa).

A 2Fe-2S ferredoxin-type domain is found at 2–84 (ARVTLRITGT…RAKGDIEIEM (83 aa)). The [2Fe-2S] cluster site is built by Cys37, Cys42, Cys45, and Cys74.

Requires [2Fe-2S] cluster as cofactor.

This is an uncharacterized protein from Escherichia coli O6:H1 (strain CFT073 / ATCC 700928 / UPEC).